The sequence spans 597 residues: Arginine--tRNA ligase (597 aa).

The 'HIGH' region motif lies at 125 to 135 (PNTNKPLHLGH).

This sequence belongs to the class-I aminoacyl-tRNA synthetase family. In terms of assembly, monomer.

The protein localises to the cytoplasm. The catalysed reaction is tRNA(Arg) + L-arginine + ATP = L-arginyl-tRNA(Arg) + AMP + diphosphate. This is Arginine--tRNA ligase from Bacteroides fragilis (strain YCH46).